A 263-amino-acid polypeptide reads, in one-letter code: Endonuclease 8 (263 aa).

P2 (schiff-base intermediate with DNA) is an active-site residue. E3 (proton donor) is an active-site residue. Catalysis depends on K53, which acts as the Proton donor; for beta-elimination activity. Residues Q70, R125, and N169 each coordinate DNA. An FPG-type zinc finger spans residues 229 to 263 (KVFHRDGEACERCGGIIEKTTLSSRPFYWCPHCQK). The active-site Proton donor; for delta-elimination activity is the R253.

This sequence belongs to the FPG family. Zn(2+) is required as a cofactor.

It catalyses the reaction 2'-deoxyribonucleotide-(2'-deoxyribose 5'-phosphate)-2'-deoxyribonucleotide-DNA = a 3'-end 2'-deoxyribonucleotide-(2,3-dehydro-2,3-deoxyribose 5'-phosphate)-DNA + a 5'-end 5'-phospho-2'-deoxyribonucleoside-DNA + H(+). Functionally, involved in base excision repair of DNA damaged by oxidation or by mutagenic agents. Acts as a DNA glycosylase that recognizes and removes damaged bases. Has a preference for oxidized pyrimidines, such as thymine glycol, 5,6-dihydrouracil and 5,6-dihydrothymine. Has AP (apurinic/apyrimidinic) lyase activity and introduces nicks in the DNA strand. Cleaves the DNA backbone by beta-delta elimination to generate a single-strand break at the site of the removed base with both 3'- and 5'-phosphates. The protein is Endonuclease 8 of Salmonella paratyphi B (strain ATCC BAA-1250 / SPB7).